Consider the following 377-residue polypeptide: Nitric oxide reductase FlRd-NAD(+) reductase (377 aa).

It belongs to the FAD-dependent oxidoreductase family. The cofactor is FAD.

The protein localises to the cytoplasm. It carries out the reaction 2 reduced [nitric oxide reductase rubredoxin domain] + NAD(+) + H(+) = 2 oxidized [nitric oxide reductase rubredoxin domain] + NADH. Its pathway is nitrogen metabolism; nitric oxide reduction. One of at least two accessory proteins for anaerobic nitric oxide (NO) reductase. Reduces the rubredoxin moiety of NO reductase. This is Nitric oxide reductase FlRd-NAD(+) reductase from Escherichia coli O7:K1 (strain IAI39 / ExPEC).